The primary structure comprises 75 residues: uncharacterized protein (75 aa).

The signal sequence occupies residues 1–18 (MRKYLSARSMCCSFFSCA).

This is an uncharacterized protein from Treponema pallidum (strain Nichols).